The chain runs to 304 residues: N-acetylmuramic acid 6-phosphate etherase (304 aa).

The SIS domain occupies 60 to 221 (GVSVLRHGGR…STAVMVRLGY (162 aa)). The Proton donor role is filled by E88. E119 is an active-site residue.

The protein belongs to the GCKR-like family. MurNAc-6-P etherase subfamily. In terms of assembly, homodimer.

The enzyme catalyses N-acetyl-D-muramate 6-phosphate + H2O = N-acetyl-D-glucosamine 6-phosphate + (R)-lactate. Its pathway is amino-sugar metabolism; N-acetylmuramate degradation. In terms of biological role, specifically catalyzes the cleavage of the D-lactyl ether substituent of MurNAc 6-phosphate, producing GlcNAc 6-phosphate and D-lactate. This chain is N-acetylmuramic acid 6-phosphate etherase, found in Thermobifida fusca (strain YX).